A 159-amino-acid chain; its full sequence is Urease accessory protein UreE (159 aa).

It belongs to the UreE family.

It localises to the cytoplasm. Involved in urease metallocenter assembly. Binds nickel. Probably functions as a nickel donor during metallocenter assembly. The sequence is that of Urease accessory protein UreE from Acinetobacter baylyi (strain ATCC 33305 / BD413 / ADP1).